A 93-amino-acid chain; its full sequence is ATP synthase subunit c (93 aa).

Transmembrane regions (helical) follow at residues 13–33 (AIGV…GMGI) and 58–78 (ISLA…FILL).

It belongs to the ATPase C chain family. As to quaternary structure, F-type ATPases have 2 components, F(1) - the catalytic core - and F(0) - the membrane proton channel. F(1) has five subunits: alpha(3), beta(3), gamma(1), delta(1), epsilon(1). F(0) has three main subunits: a(1), b(2) and c(10-14). The alpha and beta chains form an alternating ring which encloses part of the gamma chain. F(1) is attached to F(0) by a central stalk formed by the gamma and epsilon chains, while a peripheral stalk is formed by the delta and b chains.

The protein localises to the cell inner membrane. Functionally, f(1)F(0) ATP synthase produces ATP from ADP in the presence of a proton or sodium gradient. F-type ATPases consist of two structural domains, F(1) containing the extramembraneous catalytic core and F(0) containing the membrane proton channel, linked together by a central stalk and a peripheral stalk. During catalysis, ATP synthesis in the catalytic domain of F(1) is coupled via a rotary mechanism of the central stalk subunits to proton translocation. Key component of the F(0) channel; it plays a direct role in translocation across the membrane. A homomeric c-ring of between 10-14 subunits forms the central stalk rotor element with the F(1) delta and epsilon subunits. The sequence is that of ATP synthase subunit c from Campylobacter hominis (strain ATCC BAA-381 / DSM 21671 / CCUG 45161 / LMG 19568 / NCTC 13146 / CH001A).